Consider the following 58-residue polypeptide: Ranakinin-N (58 aa).

An N-terminal signal peptide occupies residues 1–22; sequence MFTMKKSLLLLFFLGTISMSLC. A propeptide spanning residues 23-43 is cleaved from the precursor; it reads EEKRDADEEETEGEAKMEDIK. The segment at 25–58 is disordered; that stretch reads KRDADEEETEGEAKMEDIKRAEAVPPGFTPFRKP. The span at 35–46 shows a compositional bias: basic and acidic residues; that stretch reads GEAKMEDIKRAE.

In terms of tissue distribution, expressed by the skin glands.

It localises to the secreted. Induces contraction of intestinal smooth muscle in isolated guinea pig ileum. May induce relaxation of arterial smooth muscle. May target bradykinin receptors (BDKRB). Lacks antibacterial activity against the Gram-positive bacterium S.aureus and the Gram-negative bacteria E.coli and B.dysenteria, and antifungal activity against C.albicans. In Hylarana nigrovittata (Black-striped frog), this protein is Ranakinin-N.